The primary structure comprises 215 residues: Cytochrome b6 (215 aa).

Residues 32 to 52 traverse the membrane as a helical segment; it reads IFYCLGGITLTCFLVQVATGF. Residue Cys35 coordinates heme c. Residues His86 and His100 each contribute to the heme b site. 3 helical membrane-spanning segments follow: residues 90–110, 116–136, and 186–206; these read ASMM…TGGF, LTWV…VTGY, and LHTF…FPMI. 2 residues coordinate heme b: His187 and His202.

Belongs to the cytochrome b family. PetB subfamily. In terms of assembly, the 4 large subunits of the cytochrome b6-f complex are cytochrome b6, subunit IV (17 kDa polypeptide, PetD), cytochrome f and the Rieske protein, while the 4 small subunits are PetG, PetL, PetM and PetN. The complex functions as a dimer. Heme b serves as cofactor. Requires heme c as cofactor.

The protein localises to the plastid. The protein resides in the chloroplast thylakoid membrane. Functionally, component of the cytochrome b6-f complex, which mediates electron transfer between photosystem II (PSII) and photosystem I (PSI), cyclic electron flow around PSI, and state transitions. The sequence is that of Cytochrome b6 from Jasminum nudiflorum (Winter jasmine).